A 394-amino-acid chain; its full sequence is Histidinol dehydrogenase (394 aa).

NAD(+) is bound by residues Tyr-113, Gln-172, and Asn-195. Substrate is bound by residues Thr-218, Gln-240, and His-243. Zn(2+)-binding residues include Gln-240 and His-243. Catalysis depends on proton acceptor residues Glu-294 and His-295. The substrate site is built by His-295, Asp-327, Glu-380, and His-385. Asp-327 provides a ligand contact to Zn(2+). His-385 contributes to the Zn(2+) binding site.

This sequence belongs to the histidinol dehydrogenase family. The cofactor is Zn(2+).

It carries out the reaction L-histidinol + 2 NAD(+) + H2O = L-histidine + 2 NADH + 3 H(+). It participates in amino-acid biosynthesis; L-histidine biosynthesis; L-histidine from 5-phospho-alpha-D-ribose 1-diphosphate: step 9/9. Functionally, catalyzes the sequential NAD-dependent oxidations of L-histidinol to L-histidinaldehyde and then to L-histidine. This chain is Histidinol dehydrogenase, found in Sulfurisphaera tokodaii (strain DSM 16993 / JCM 10545 / NBRC 100140 / 7) (Sulfolobus tokodaii).